A 185-amino-acid chain; its full sequence is F-box protein At1g61340 (185 aa).

The F-box domain occupies 78 to 126 (SRELEDLPLDILVRIICGVEHEDLKQLFHVSKTIREATMIAKQSHFAYS).

In Arabidopsis thaliana (Mouse-ear cress), this protein is F-box protein At1g61340.